The sequence spans 121 residues: Ribosome-binding factor A (121 aa).

It belongs to the RbfA family. As to quaternary structure, monomer. Binds 30S ribosomal subunits, but not 50S ribosomal subunits or 70S ribosomes.

Its subcellular location is the cytoplasm. In terms of biological role, one of several proteins that assist in the late maturation steps of the functional core of the 30S ribosomal subunit. Associates with free 30S ribosomal subunits (but not with 30S subunits that are part of 70S ribosomes or polysomes). Required for efficient processing of 16S rRNA. May interact with the 5'-terminal helix region of 16S rRNA. In Heliobacterium modesticaldum (strain ATCC 51547 / Ice1), this protein is Ribosome-binding factor A.